We begin with the raw amino-acid sequence, 326 residues long: Peroxidase 1 (326 aa).

The N-terminal stretch at Met1 to Ala22 is a signal peptide. Gln23 is modified (pyrrolidone carboxylic acid). Intrachain disulfides connect Cys33–Cys112, Cys66–Cys71, Cys118–Cys322, and Cys196–Cys231. The active-site Proton acceptor is His64. Ca(2+) is bound by residues Asp65, Val68, Gly70, Asp72, and Ser74. 2 N-linked (GlcNAc...) asparagine glycosylation sites follow: Asn82 and Asn153. Pro159 is a binding site for substrate. Asn164 is a glycosylation site (N-linked (GlcNAc...) asparagine). His189 lines the heme b pocket. Position 190 (Thr190) interacts with Ca(2+). N-linked (GlcNAc...) asparagine glycans are attached at residues Asn205 and Asn237. Asp244, Ser247, and Asp252 together coordinate Ca(2+).

It belongs to the peroxidase family. Classical plant (class III) peroxidase subfamily. The cofactor is Ca(2+). Requires heme b as cofactor.

It is found in the secreted. It catalyses the reaction 2 a phenolic donor + H2O2 = 2 a phenolic radical donor + 2 H2O. Removal of H(2)O(2), oxidation of toxic reductants, biosynthesis and degradation of lignin, suberization, auxin catabolism, response to environmental stresses such as wounding, pathogen attack and oxidative stress. These functions might be dependent on each isozyme/isoform in each plant tissue. This chain is Peroxidase 1 (PRX74), found in Oryza sativa subsp. japonica (Rice).